A 721-amino-acid polypeptide reads, in one-letter code: Photosystem I P700 chlorophyll a apoprotein A1 (721 aa).

Transmembrane regions (helical) follow at residues Val-61–Ala-84, Leu-147–His-170, Leu-186–Leu-210, Thr-282–Tyr-300, Trp-337–Tyr-360, Leu-376–Val-402, Ala-424–His-446, and Phe-522–Leu-540. Cys-564 and Cys-573 together coordinate [4Fe-4S] cluster. 2 helical membrane passes run His-580–Trp-601 and Leu-655–Phe-677. His-666 is a binding site for chlorophyll a'. Residues Met-674 and Tyr-682 each coordinate chlorophyll a. Trp-683 lines the phylloquinone pocket. The chain crosses the membrane as a helical span at residues Ala-715–Tyr-721.

The protein belongs to the PsaA/PsaB family. In terms of assembly, the PsaA/B heterodimer binds the P700 chlorophyll special pair and subsequent electron acceptors. PSI consists of a core antenna complex that captures photons, and an electron transfer chain that converts photonic excitation into a charge separation. The eukaryotic PSI reaction center is composed of at least 11 subunits. The cofactor is P700 is a chlorophyll a/chlorophyll a' dimer, A0 is one or more chlorophyll a, A1 is one or both phylloquinones and FX is a shared 4Fe-4S iron-sulfur center..

The protein localises to the plastid. Its subcellular location is the chloroplast thylakoid membrane. It catalyses the reaction reduced [plastocyanin] + hnu + oxidized [2Fe-2S]-[ferredoxin] = oxidized [plastocyanin] + reduced [2Fe-2S]-[ferredoxin]. Functionally, psaA and PsaB bind P700, the primary electron donor of photosystem I (PSI), as well as the electron acceptors A0, A1 and FX. PSI is a plastocyanin-ferredoxin oxidoreductase, converting photonic excitation into a charge separation, which transfers an electron from the donor P700 chlorophyll pair to the spectroscopically characterized acceptors A0, A1, FX, FA and FB in turn. Oxidized P700 is reduced on the lumenal side of the thylakoid membrane by plastocyanin. The polypeptide is Photosystem I P700 chlorophyll a apoprotein A1 (Ginkgo biloba (Ginkgo)).